A 578-amino-acid chain; its full sequence is Asparagine synthetase [glutamine-hydrolyzing] 2 (578 aa).

Catalysis depends on Cys-2, which acts as the For GATase activity. One can recognise a Glutamine amidotransferase type-2 domain in the interval 2 to 185 (CGILAVLGCI…PGHIYSSKQG (184 aa)). L-glutamine is bound by residues 50-54 (RLAII), 75-77 (NGE), and Asp-98. Residues 210–450 (LRNAFEKAVI…LPKHILYRQK (241 aa)) form the Asparagine synthetase domain. Residues Leu-231, Ile-267, and 341–342 (SG) each bind ATP.

In terms of tissue distribution, expressed in the vascular region adjacent to leaf mesophyll cells in the companion cell-sieve tube element complex.

It carries out the reaction L-aspartate + L-glutamine + ATP + H2O = L-asparagine + L-glutamate + AMP + diphosphate + H(+). It functions in the pathway amino-acid biosynthesis; L-asparagine biosynthesis. In terms of biological role, essential for nitrogen assimilation, distribution and remobilization within the plant via the phloem. This Arabidopsis thaliana (Mouse-ear cress) protein is Asparagine synthetase [glutamine-hydrolyzing] 2 (ASN2).